The sequence spans 88 residues: MGGIGIWQLAIITVIVILLFGTKKLRGIGGDLGGAIKGFKKAIKEDNDKDSTQVDDKDSTQVDDNAKQPSNKKVEENIKEQSKEKDRA.

Residues 1–21 (MGGIGIWQLAIITVIVILLFG) form a helical membrane-spanning segment. The disordered stretch occupies residues 46-88 (DNDKDSTQVDDKDSTQVDDNAKQPSNKKVEENIKEQSKEKDRA).

Belongs to the TatA/E family. As to quaternary structure, the Tat system comprises two distinct complexes: a TatABC complex, containing multiple copies of TatA, TatB and TatC subunits, and a separate TatA complex, containing only TatA subunits. Substrates initially bind to the TatABC complex, which probably triggers association of the separate TatA complex to form the active translocon.

The protein localises to the cell inner membrane. Its function is as follows. Part of the twin-arginine translocation (Tat) system that transports large folded proteins containing a characteristic twin-arginine motif in their signal peptide across membranes. TatA could form the protein-conducting channel of the Tat system. In Psychromonas ingrahamii (strain DSM 17664 / CCUG 51855 / 37), this protein is Sec-independent protein translocase protein TatA.